A 62-amino-acid polypeptide reads, in one-letter code: Large ribosomal subunit protein eL24 (62 aa).

C6, C9, C32, and C36 together coordinate Zn(2+). Residues 6–36 (CSFCGELLEPGTGLLFAKRDGSTYYFCSSKC) form a C4-type zinc finger.

It belongs to the eukaryotic ribosomal protein eL24 family. In terms of assembly, part of the 50S ribosomal subunit. Forms a cluster with proteins L3 and L14. The cofactor is Zn(2+).

Functionally, binds to the 23S rRNA. This chain is Large ribosomal subunit protein eL24, found in Methanococcoides burtonii (strain DSM 6242 / NBRC 107633 / OCM 468 / ACE-M).